The following is a 762-amino-acid chain: Acyl-homoserine lactone acylase PvdQ (762 aa).

A signal peptide spans 1–23 (MGMRTVLTGLAGMLLGSMMPVQA). A propeptide spans 194–216 (ALSGEQAFQVAEQRRQRFRLERG) (spacer peptide). The active-site Nucleophile is the S217.

This sequence belongs to the peptidase S45 family. As to quaternary structure, heterodimer of an alpha subunit and a beta subunit processed from the same precursor.

It localises to the periplasm. It catalyses the reaction an N-acyl-L-homoserine lactone + H2O = L-homoserine lactone + a carboxylate. In terms of biological role, catalyzes the deacylation of acyl-homoserine lactone (AHL or acyl-HSL), releasing homoserine lactone (HSL) and the corresponding fatty acid. Possesses a specificity for the degradation of long-chain acyl-HSLs (side chains of 11 to 14 carbons in length). Degrades 3-oxo-C12-HSL, one of the two main AHL signal molecules of P.aeruginosa, and thereby functions as a quorum quencher, inhibiting the las quorum-sensing system. Therefore, may enable P.aeruginosa to modulate its own quorum-sensing-dependent pathogenic potential. Also appears to be required for pyoverdin biosynthesis. The protein is Acyl-homoserine lactone acylase PvdQ (pvdQ) of Pseudomonas aeruginosa (strain ATCC 15692 / DSM 22644 / CIP 104116 / JCM 14847 / LMG 12228 / 1C / PRS 101 / PAO1).